Consider the following 785-residue polypeptide: Endonuclease MutS2 (785 aa).

335–342 provides a ligand contact to ATP; sequence GPNTGGKT. Positions 710 to 785 constitute a Smr domain; sequence LDLRGERYED…GNGVTIVEFK (76 aa).

This sequence belongs to the DNA mismatch repair MutS family. MutS2 subfamily. In terms of assembly, homodimer. Binds to stalled ribosomes, contacting rRNA.

Functionally, endonuclease that is involved in the suppression of homologous recombination and thus may have a key role in the control of bacterial genetic diversity. In terms of biological role, acts as a ribosome collision sensor, splitting the ribosome into its 2 subunits. Detects stalled/collided 70S ribosomes which it binds and splits by an ATP-hydrolysis driven conformational change. Acts upstream of the ribosome quality control system (RQC), a ribosome-associated complex that mediates the extraction of incompletely synthesized nascent chains from stalled ribosomes and their subsequent degradation. Probably generates substrates for RQC. The chain is Endonuclease MutS2 from Listeria monocytogenes serotype 4b (strain CLIP80459).